The chain runs to 386 residues: MNVYQLKEELIEYAKSIGVDKIGFTTADTFDSLKDRLILQESLGYLSGFEEPDIEKRVTPKLLLPKAKSIVAIALAYPSRMKDAPRSTRTERRGIFCRASWGKDYHDVLREKLDLLEDFLKSKHEDIRTKSMVDTGELSDRAVAERAGIGFSAKNCMITTPEYGSYVYLAEMITNIPFEPDVPIEDMCGSCTKCLDACPTGALVNPGQLNAQRCISFLTQTKGFLPDEFRTKIGNRLYGCDTCQTVCPLNKGKDFHLHPEMEPDPEIAKPLLKPLLAISNREFKEKFGHVSGSWRGKKPIQRNAILALAHFKDASALPELTELMHKDPRPVIRGTAAWAIGKIGDPAYAEELEKALEKEKDEEAKLEIEKGIELLKASGMTKQGLS.

Cob(II)alamin-binding positions include arginine 57, cysteine 97, aspartate 134, serine 139–arginine 141, serine 152, asparagine 155, isoleucine 158, and leucine 169. The active-site Proton donor is aspartate 134. The 4Fe-4S ferredoxin-type domain occupies phenylalanine 178–glutamine 208. [4Fe-4S] cluster is bound by residues cysteine 188, cysteine 191, cysteine 194, cysteine 198, and cysteine 214. Residue serine 216 participates in cob(II)alamin binding. Residues glutamine 220 and lysine 222 each coordinate tRNA. Positions 240, 243, and 247 each coordinate [4Fe-4S] cluster. Residue cysteine 240–aspartate 241 participates in cob(II)alamin binding. The tRNA site is built by asparagine 280, arginine 281, arginine 295, lysine 297, and lysine 298. An HEAT-like PBS-type repeat occupies arginine 333–glutamate 357.

Belongs to the QueG family. As to quaternary structure, monomer. Requires cob(II)alamin as cofactor. [4Fe-4S] cluster serves as cofactor.

It localises to the cytoplasm. It carries out the reaction epoxyqueuosine(34) in tRNA + AH2 = queuosine(34) in tRNA + A + H2O. Its pathway is tRNA modification; tRNA-queuosine biosynthesis. Its function is as follows. Catalyzes the conversion of epoxyqueuosine (oQ) to queuosine (Q), which is a hypermodified base found in the wobble positions of tRNA(Asp), tRNA(Asn), tRNA(His) and tRNA(Tyr). This is Epoxyqueuosine reductase from Bacillus subtilis (strain 168).